The primary structure comprises 473 residues: Cysteine--tRNA ligase (473 aa).

Cys-29 is a Zn(2+) binding site. Positions 31–41 (ATVQSAPHIGH) match the 'HIGH' region motif. Zn(2+)-binding residues include Cys-207, His-232, and Glu-236. Positions 263 to 267 (KMSKS) match the 'KMSKS' region motif. Lys-266 lines the ATP pocket.

Belongs to the class-I aminoacyl-tRNA synthetase family. As to quaternary structure, monomer. The cofactor is Zn(2+).

It localises to the cytoplasm. The catalysed reaction is tRNA(Cys) + L-cysteine + ATP = L-cysteinyl-tRNA(Cys) + AMP + diphosphate. This is Cysteine--tRNA ligase from Corynebacterium kroppenstedtii (strain DSM 44385 / JCM 11950 / CIP 105744 / CCUG 35717).